The chain runs to 65 residues: Large ribosomal subunit protein bL35 (65 aa).

The segment at 1–51 (MPKIKTNRGAAKRFRKSASGRVKRGNAFTSHILTHKTRKNKRNLRGTSMVS) is disordered. Composition is skewed to basic residues over residues 10-24 (AAKR…RVKR) and 33-44 (LTHKTRKNKRNL).

It belongs to the bacterial ribosomal protein bL35 family.

This Pelobacter propionicus (strain DSM 2379 / NBRC 103807 / OttBd1) protein is Large ribosomal subunit protein bL35.